Consider the following 692-residue polypeptide: Acyl-coenzyme A oxidase 2, peroxisomal (692 aa).

A peroxisome-targeting transit peptide spans 1–49 (MESRREKNPMTEEESDGLIAARRIQRLSLHLSPSLTPSPSLPLVQTETC). Residues Thr186, Ser192, Gly225, Arg365, Gln384, Gly452, and Thr473 each coordinate FAD. Glu475 serves as the catalytic Proton acceptor. An FAD-binding site is contributed by Asp477.

The protein belongs to the acyl-CoA oxidase family. Homodimer. FAD serves as cofactor. Expressed mainly in flowers and young seedlings. Lower expression in roots, leaves and bracts.

The protein resides in the peroxisome. It carries out the reaction a 2,3-saturated acyl-CoA + O2 = a (2E)-enoyl-CoA + H2O2. Catalyzes the desaturation of long-chain acyl-CoAs to 2-trans-enoyl-CoAs. Active on substrates longer than C14 and mostly with C18-CoA. Activity on long-chain mono-unsaturated substrates is double than with the corresponding saturated substrates. This chain is Acyl-coenzyme A oxidase 2, peroxisomal, found in Arabidopsis thaliana (Mouse-ear cress).